Reading from the N-terminus, the 72-residue chain is Cell division protein ZapB (72 aa).

Residues 2-72 adopt a coiled-coil conformation; sequence SLEILDQLEG…RSLLGQIDNV (71 aa). Positions 34 to 57 are disordered; that stretch reads NQQAQQANDELRSENEQLKGEHNN. The span at 42–57 shows a compositional bias: basic and acidic residues; sequence DELRSENEQLKGEHNN.

Belongs to the ZapB family. As to quaternary structure, homodimer. The ends of the coiled-coil dimer bind to each other, forming polymers. Interacts with FtsZ.

The protein resides in the cytoplasm. Its function is as follows. Non-essential, abundant cell division factor that is required for proper Z-ring formation. It is recruited early to the divisome by direct interaction with FtsZ, stimulating Z-ring assembly and thereby promoting cell division earlier in the cell cycle. Its recruitment to the Z-ring requires functional FtsA or ZipA. This Mannheimia succiniciproducens (strain KCTC 0769BP / MBEL55E) protein is Cell division protein ZapB.